Here is a 1522-residue protein sequence, read N- to C-terminus: Lysophospholipase nte1 (1522 aa).

The interval Met1–Ser24 is disordered. Over Met1–Gly65 the chain is Cytoplasmic. Residues Ser15–Ser24 are compositionally biased toward low complexity. A helical transmembrane segment spans residues Trp66–Ile86. Topologically, residues Thr87–Thr108 are lumenal. Residues Met109–Ile129 form a helical membrane-spanning segment. Residues Arg130–Ile1522 are Cytoplasmic-facing. 3 disordered regions span residues Val308–Pro384, Arg523–Pro544, and Thr757–Arg776. A compositionally biased stretch (basic residues) spans Glu369–Ser381. A nucleoside 3',5'-cyclic phosphate-binding positions include Gly680–Ser800 and Arg840–Arg960. One can recognise a PNPLA domain in the interval Leu1219–Lys1383. A GXGXXG motif is present at residues Gly1223–Gly1228. Positions Gly1250 to Gly1254 match the GXSXG motif. Ser1252 serves as the catalytic Nucleophile. The active-site Proton acceptor is the Asp1370. The short motif at Asp1370–Gly1372 is the DGA/G element. The disordered stretch occupies residues Leu1501 to Ile1522.

It belongs to the NTE family.

The protein resides in the endoplasmic reticulum membrane. It carries out the reaction a 1-acyl-sn-glycero-3-phosphocholine + H2O = sn-glycerol 3-phosphocholine + a fatty acid + H(+). Its activity is regulated as follows. Inhibited by organophosphorus esters. Intracellular phospholipase B that catalyzes the double deacylation of phosphatidylcholine (PC) to glycerophosphocholine (GroPCho). Plays an important role in membrane lipid homeostasis. Responsible for the rapid PC turnover in response to inositol, elevated temperatures, or when choline is present in the growth medium. This chain is Lysophospholipase nte1 (nte1), found in Aspergillus fumigatus (strain ATCC MYA-4609 / CBS 101355 / FGSC A1100 / Af293) (Neosartorya fumigata).